The primary structure comprises 375 residues: ELAV-like protein 2 (375 aa).

RRM domains are found at residues 67–145 (TNLI…YARP), 153–233 (ANLY…FANN), and 292–370 (WCIF…FKTS).

Belongs to the RRM elav family. Part of a ribonucleoprotein (RNP) complex, at least composed of elavl1/elrA and/or elavl2/elrB, igf2bp3/vg1RBP, ddx6/Xp54, ybx2/frgy2, lsm14b/rap55b and, in a subset of RNP complexes, stau1/staufen. Binds RNA as a homooligomer.

The protein resides in the cytoplasm. It is found in the cell cortex. Functionally, binds to poly-U elements and AU-rich elements (AREs) in the 3'-UTR of target mRNAs. Required for the vegetal localization of vg1 mRNA. Probably required for nervous system development. The chain is ELAV-like protein 2 from Xenopus tropicalis (Western clawed frog).